Reading from the N-terminus, the 222-residue chain is Lipid A 4'-phosphatase (222 aa).

Residues 1-3 (MAR) are Cytoplasmic-facing. Residues 4–24 (FHIILGLVVCFFAWIFFLIFP) form a helical membrane-spanning segment. Residues 25 to 58 (NLDIQFAGHFYNSSAHQFIGGYDGFLGFLHWFAR) are Periplasmic-facing. A helical membrane pass occupies residues 59 to 79 (FFPIFFSIIVILFLLGSLFID). The Cytoplasmic portion of the chain corresponds to 80 to 87 (KFKIKYRK). A helical membrane pass occupies residues 88–108 (AIFFIAVCLWIGPGLVVNYVF). Residues 109-144 (KDHWGRPRPVMVEQFNGDKIFQPPFVISSQCDKNCS) are Periplasmic-facing. A helical membrane pass occupies residues 145–165 (FVCGDASMGFWLFAFMPLLAT). Over 166-169 (RKKK) the chain is Cytoplasmic. A helical transmembrane segment spans residues 170-190 (LVAFIAAVVAGGGLGLMRMSQ). Residues 191 to 193 (GGH) lie on the Periplasmic side of the membrane. A helical transmembrane segment spans residues 194–214 (FFSDVVFCGIFVYISTWVVYA). Topologically, residues 215 to 222 (LMYRKKEY) are cytoplasmic.

It belongs to the lipid A LpxF 4'-phosphatase family.

It localises to the cell inner membrane. Its pathway is bacterial outer membrane biogenesis; LPS lipid A biosynthesis. In terms of biological role, removes the 4'-phosphate moiety from lipid IV(A) (a tetraacylated precursor of lipid A) and from pentaacylated lipid A, but not from hexaacylated lipid A (as is found in E.coli). Does not dephosphorylate phosphatidic acid, phosphatidylglycerophosphate, or the 1-phosphate group of lipid A and lipid A precursors. Its expression in E.coli confers resistance to the cationic antimicrobial peptide (CAMP) polymyxin B. Plays a critical role in the ability of the bacteria to avoid the host's innate immune system, especially the bactericidal action of CAMPs, although whether it is CAMP-sensitivity or increased sensitivity to the immune system is not clear. The protein is Lipid A 4'-phosphatase of Francisella tularensis subsp. novicida (strain U112).